The primary structure comprises 108 residues: UPF0145 protein Patl_2194 (108 aa).

This sequence belongs to the UPF0145 family.

In Pseudoalteromonas atlantica (strain T6c / ATCC BAA-1087), this protein is UPF0145 protein Patl_2194.